We begin with the raw amino-acid sequence, 138 residues long: Endonuclease V (138 aa).

Threonine 2 functions as the Nucleophile; via amide nitrogen in the catalytic mechanism. Catalysis depends on glutamate 23, which acts as the Proton acceptor.

In terms of assembly, monomer.

It carries out the reaction Cleaves the N-glycosidic bond between the 5'-pyrimidine residue in cyclobutadipyrimidine (in DNA) and the corresponding deoxy-D-ribose residue.. It catalyses the reaction 2'-deoxyribonucleotide-(2'-deoxyribose 5'-phosphate)-2'-deoxyribonucleotide-DNA = a 3'-end 2'-deoxyribonucleotide-(2,3-dehydro-2,3-deoxyribose 5'-phosphate)-DNA + a 5'-end 5'-phospho-2'-deoxyribonucleoside-DNA + H(+). In terms of biological role, participates in the repair of UV-damaged DNA by excising pyrimidine dimers that are the major UV-lesions. DNA glycosylase activity hydrolyzes the glycosylic bond of the 5' pyrimidine of the dimer. This leaves apurinic/apyrimidic (AP) sites in the DNA. These AP sites are removed by the AP lyase activity which cleaves the intrapyrimidine phosphodiester bond. Catalysis proceeds via a protonated imine covalent intermediate between the alpha-amino group of the N-terminal threonine residue and the C1' of the deoxyribose sugar of the 5' pyrimidine at the dimer site. This Enterobacteria phage T4 (Bacteriophage T4) protein is Endonuclease V.